Here is a 637-residue protein sequence, read N- to C-terminus: Chaperone protein HtpG (637 aa).

Residues 1 to 335 (MQGTVNSERL…SSDLPLNISR (335 aa)) are a; substrate-binding. The segment at 336–559 (ETLQNNKIIE…DGSMDIRMER (224 aa)) is b. The c stretch occupies residues 560-637 (FLREQKQLNY…RMNNVLSQIN (78 aa)).

This sequence belongs to the heat shock protein 90 family. Homodimer.

The protein localises to the cytoplasm. Molecular chaperone. Has ATPase activity. The sequence is that of Chaperone protein HtpG from Ehrlichia ruminantium (strain Welgevonden).